We begin with the raw amino-acid sequence, 87 residues long: Small ribosomal subunit protein uS15c (87 aa).

This sequence belongs to the universal ribosomal protein uS15 family. As to quaternary structure, part of the 30S ribosomal subunit.

It localises to the plastid. The protein localises to the chloroplast. This Solanum bulbocastanum (Wild potato) protein is Small ribosomal subunit protein uS15c (rps15).